The sequence spans 209 residues: N-(5'-phosphoribosyl)anthranilate isomerase (209 aa).

It belongs to the TrpF family.

The catalysed reaction is N-(5-phospho-beta-D-ribosyl)anthranilate = 1-(2-carboxyphenylamino)-1-deoxy-D-ribulose 5-phosphate. It functions in the pathway amino-acid biosynthesis; L-tryptophan biosynthesis; L-tryptophan from chorismate: step 3/5. The chain is N-(5'-phosphoribosyl)anthranilate isomerase from Granulibacter bethesdensis (strain ATCC BAA-1260 / CGDNIH1).